Reading from the N-terminus, the 529-residue chain is UDP-glucuronosyltransferase 2B18 (529 aa).

The N-terminal stretch at 1 to 21 (MSVKWTSVILLIQLSFYFSSG) is a signal peptide. N-linked (GlcNAc...) asparagine glycans are attached at residues Asn-67 and Asn-68. The helical transmembrane segment at 493–513 (VIGFLLACVATVIFIIMKCCL) threads the bilayer.

It belongs to the UDP-glycosyltransferase family. As to expression, expressed in liver, prostate, kidney, testis, adrenal, bile duct, bladder, colon, small intestine, cerebellum and pancreas.

It localises to the microsome membrane. It is found in the endoplasmic reticulum membrane. It catalyses the reaction glucuronate acceptor + UDP-alpha-D-glucuronate = acceptor beta-D-glucuronoside + UDP + H(+). In terms of biological role, UDPGT is of major importance in the conjugation and subsequent elimination of potentially toxic xenobiotics and endogenous compounds. This isozyme displays activity toward 3-hydroxyandrogens. It is principally active on C19 steroids having a hydroxyl group at position 3-alpha of the steroid molecule and also active on planar phenols and bile acids. In Macaca fascicularis (Crab-eating macaque), this protein is UDP-glucuronosyltransferase 2B18 (UGT2B18).